The following is a 335-amino-acid chain: (+)-caryolan-1-ol synthase (335 aa).

Mg(2+)-binding residues include D83, D87, N220, S224, and E228. Residues 83-87 (DDEFD) carry the DDXXD motif motif. Positions 220–228 (NDICSFEKE) match the NSE/DTE motif motif.

It belongs to the terpene synthase family. Requires Mg(2+) as cofactor. Mn(2+) is required as a cofactor.

The catalysed reaction is (2E,6E)-farnesyl diphosphate = (+)-(E)-beta-caryophyllene + diphosphate. It carries out the reaction (+)-(E)-beta-caryophyllene + H2O = (+)-caryolan-1-ol. It participates in secondary metabolite biosynthesis; terpenoid biosynthesis. In terms of biological role, sesquiterpene cyclase that first catalyzes the cyclization of farnesyl diphosphate (FPP) to the bicyclic sesquiterpene (+)-beta-caryophyllene intermediate, and then its conversion to (+)-caryolan-1-ol via a second cyclization and the addition of a water molecule. The sequence is that of (+)-caryolan-1-ol synthase (gcoA) from Streptomyces griseus subsp. griseus (strain JCM 4626 / CBS 651.72 / NBRC 13350 / KCC S-0626 / ISP 5235).